A 641-amino-acid polypeptide reads, in one-letter code: DEAD-box ATP-dependent RNA helicase 50 (641 aa).

3 disordered regions span residues 86–115 (SMPS…IGNF), 129–189 (RSAH…LNSV), and 197–216 (DDLD…WGNI). Over residues 150 to 159 (PSDESDEDGT) the composition is skewed to acidic residues. The Q motif motif lies at 240 to 268 (RSFKEIGCSDEILGALRSFGFPRPSHIQA). One can recognise a Helicase ATP-binding domain in the interval 271-452 (YRPVLEGKSC…VETFPDCELI (182 aa)). 284 to 291 (DQSGSGKT) serves as a coordination point for ATP. The DEAD box signature appears at 399 to 402 (DEVD). In terms of domain architecture, Helicase C-terminal spans 487–641 (NKKSALVKII…GHPLHDVPCV (155 aa)).

Belongs to the DEAD box helicase family.

It carries out the reaction ATP + H2O = ADP + phosphate + H(+). Its function is as follows. Probably involved in resistance to biotic and abiotic stresses. Confers tolerance to oxidative stress and mediates pathogenesis-related (PR) genes expression. Exhibits RNA-dependent ATPase and ATP-dependent RNA helicase activities in vitro. This is DEAD-box ATP-dependent RNA helicase 50 from Oryza sativa subsp. japonica (Rice).